The primary structure comprises 124 residues: Small ribosomal subunit protein uS12 (124 aa).

The residue at position 89 (Asp89) is a 3-methylthioaspartic acid.

The protein belongs to the universal ribosomal protein uS12 family. Part of the 30S ribosomal subunit. Contacts proteins S8 and S17. May interact with IF1 in the 30S initiation complex.

With S4 and S5 plays an important role in translational accuracy. Its function is as follows. Interacts with and stabilizes bases of the 16S rRNA that are involved in tRNA selection in the A site and with the mRNA backbone. Located at the interface of the 30S and 50S subunits, it traverses the body of the 30S subunit contacting proteins on the other side and probably holding the rRNA structure together. The combined cluster of proteins S8, S12 and S17 appears to hold together the shoulder and platform of the 30S subunit. The chain is Small ribosomal subunit protein uS12 from Serratia proteamaculans (strain 568).